The following is a 387-amino-acid chain: NAD(P)H oxidoreductase RTN4IP1, mitochondrial (387 aa).

The transit peptide at 1–27 directs the protein to the mitochondrion; that stretch reads MLMCRRWLVCSLRCHYRSFSFSAARRT. Residues 38-379 enclose the Enoyl reductase (ER) domain; that stretch reads GKNDVLRFTK…QGHARGKTVV (342 aa). Ser-200, Gly-202, Val-203, Ser-223, Tyr-241, Leu-286, Gly-327, Phe-329, His-372, Ala-373, and Arg-374 together coordinate NADPH.

The protein belongs to the zinc-containing alcohol dehydrogenase family. Quinone oxidoreductase subfamily.

The protein resides in the mitochondrion matrix. It localises to the mitochondrion outer membrane. The catalysed reaction is a 3-demethylubiquinone + NADH + 2 H(+) = a 3-demethylubiquinol + NAD(+). The enzyme catalyses a 3-demethylubiquinone + NADPH + 2 H(+) = a 3-demethylubiquinol + NADP(+). It carries out the reaction 3-demethylubiquinone-10 + NADH + 2 H(+) = 3-demethylubiquinol-10 + NAD(+). It catalyses the reaction 3-demethylubiquinone-10 + NADPH + 2 H(+) = 3-demethylubiquinol-10 + NADP(+). The protein operates within cofactor biosynthesis; ubiquinone biosynthesis. Functionally, NAD(P)H oxidoreductase involved in the ubiquinone biosynthetic pathway. Required for the O-methyltransferase activity of COQ3. Able to catalyze the oxidoreduction of 3-demethylubiquinone into 3-demethylubiquinol in vitro. However, it is unclear if 3-demethylubiquinone constitutes a substrate in vivo. May also play a role in the regulation of retinal ganglion cell (RGC) neurite outgrowth, and hence in the development of the inner retina and optic nerve. The polypeptide is NAD(P)H oxidoreductase RTN4IP1, mitochondrial (rtn4ip1) (Danio rerio (Zebrafish)).